The primary structure comprises 424 residues: CUGBP Elav-like family member 4 (424 aa).

The segment at 8-27 is disordered; that stretch reads VANGQPDNSSLSSNPTGHMN. Polar residues predominate over residues 9–24; the sequence is ANGQPDNSSLSSNPTG. 2 consecutive RRM domains span residues 47–128 and 342–417; these read IKLF…PADS and PQPP…LKRP.

It belongs to the CELF/BRUNOL family.

It is found in the nucleus. The protein resides in the cytoplasm. Functionally, RNA-binding protein that may be implicated in the regulation of pre-mRNA alternative splicing. This chain is CUGBP Elav-like family member 4 (celf4), found in Xenopus tropicalis (Western clawed frog).